The following is a 328-amino-acid chain: Lipoyl synthase (328 aa).

The [4Fe-4S] cluster site is built by Cys-56, Cys-61, Cys-67, Cys-82, Cys-86, Cys-89, and Ser-293. Residues 68 to 282 enclose the Radical SAM core domain; sequence WEDREATFLI…ERVGAELGFS (215 aa).

The protein belongs to the radical SAM superfamily. Lipoyl synthase family. It depends on [4Fe-4S] cluster as a cofactor.

It is found in the cytoplasm. It carries out the reaction [[Fe-S] cluster scaffold protein carrying a second [4Fe-4S](2+) cluster] + N(6)-octanoyl-L-lysyl-[protein] + 2 oxidized [2Fe-2S]-[ferredoxin] + 2 S-adenosyl-L-methionine + 4 H(+) = [[Fe-S] cluster scaffold protein] + N(6)-[(R)-dihydrolipoyl]-L-lysyl-[protein] + 4 Fe(3+) + 2 hydrogen sulfide + 2 5'-deoxyadenosine + 2 L-methionine + 2 reduced [2Fe-2S]-[ferredoxin]. Its pathway is protein modification; protein lipoylation via endogenous pathway; protein N(6)-(lipoyl)lysine from octanoyl-[acyl-carrier-protein]: step 2/2. Functionally, catalyzes the radical-mediated insertion of two sulfur atoms into the C-6 and C-8 positions of the octanoyl moiety bound to the lipoyl domains of lipoate-dependent enzymes, thereby converting the octanoylated domains into lipoylated derivatives. This Frankia alni (strain DSM 45986 / CECT 9034 / ACN14a) protein is Lipoyl synthase.